The chain runs to 142 residues: Gonadotropin subunit beta-2 (142 aa).

A signal peptide spans 1–24; sequence MLGLHVGTLMISLFLCILLEPVEG. Intrachain disulfides connect Cys-30–Cys-78, Cys-44–Cys-93, Cys-47–Cys-131, Cys-55–Cys-109, Cys-59–Cys-111, and Cys-114–Cys-121. Asn-34 carries an N-linked (GlcNAc...) asparagine glycan.

The protein belongs to the glycoprotein hormones subunit beta family. Heterodimer of an alpha and a beta chain.

It is found in the secreted. In terms of biological role, involved in gametogenesis and steroidogenesis. The polypeptide is Gonadotropin subunit beta-2 (cgbb) (Coregonus autumnalis (Arctic cisco)).